The primary structure comprises 490 residues: Betaine aldehyde dehydrogenase (490 aa).

K(+) contacts are provided by Ile-27 and Asp-93. NAD(+) is bound at residue 150–152 (GAW). Lys-162 acts as the Charge relay system in catalysis. 176–179 (KPSE) is a binding site for NAD(+). Val-180 provides a ligand contact to K(+). 230-233 (GTTT) serves as a coordination point for NAD(+). Leu-246 contributes to the K(+) binding site. The active-site Proton acceptor is the Glu-252. Gly-254, Cys-286, and Glu-387 together coordinate NAD(+). Residue Cys-286 is the Nucleophile of the active site. Cys-286 is modified (cysteine sulfenic acid (-SOH)). K(+) contacts are provided by Lys-457 and Gly-460. Catalysis depends on Glu-464, which acts as the Charge relay system.

The protein belongs to the aldehyde dehydrogenase family. As to quaternary structure, dimer of dimers. The cofactor is K(+).

The enzyme catalyses betaine aldehyde + NAD(+) + H2O = glycine betaine + NADH + 2 H(+). The protein operates within amine and polyamine biosynthesis; betaine biosynthesis via choline pathway; betaine from betaine aldehyde: step 1/1. Functionally, involved in the biosynthesis of the osmoprotectant glycine betaine. Catalyzes the irreversible oxidation of betaine aldehyde to the corresponding acid. This Pseudomonas putida (strain GB-1) protein is Betaine aldehyde dehydrogenase.